Consider the following 636-residue polypeptide: Polyglycine hydrolase (636 aa).

The signal sequence occupies residues 1–22 (MHSLSLRRLLTSVLSLCSCSSA). Asparagine 30 and asparagine 151 each carry an N-linked (GlcNAc...) asparagine glycan. A disulfide bridge connects residues cysteine 141 and cysteine 175. The active site involves serine 363. 2 N-linked (GlcNAc...) asparagine glycosylation sites follow: asparagine 383 and asparagine 481. The segment at 512–540 (TEDRIVQESKNTGQDPVHPQSAKLVPGPH) is disordered.

The protein belongs to the peptidase S12 family.

It localises to the secreted. It catalyses the reaction a glycyl-glycyl-[protein] + H2O = N-terminal glycyl-[protein] + [protein]-C-terminal glycine. Functionally, serine-type endopeptidase that cleaves Gly-Gly bonds in the polyglycine linker of host plant class IV chitinases to disrupt their chitin-binding, and thereby plays a role in lowering the defense responses of the host to the fungus. Degrades Z.mays Endochitinase A (CHIA) in vitro, although corn is not its host species. This Fusarium vanettenii (strain ATCC MYA-4622 / CBS 123669 / FGSC 9596 / NRRL 45880 / 77-13-4) (Fusarium solani subsp. pisi) protein is Polyglycine hydrolase.